The primary structure comprises 289 residues: Toxin tox21A (289 aa).

The signal sequence occupies residues 1 to 14 (MNLYFLFFISTILA). The propeptide occupies 15 to 27 (AKPFNSFNKTSLI). A disordered region spans residues 270-289 (DKDITVHENAGDPKSDSRRC).

In terms of processing, contains several disulfide bonds. As to expression, posterior glands which appear to be connected with the stylet through a series of ducts.

It localises to the secreted. Its function is as follows. Has contracting-paralyzing activity in insect larvae. The protein is Toxin tox21A of Pyemotes tritici (Straw itch mite).